The following is a 333-amino-acid chain: Adenosine deaminase (333 aa).

Zn(2+)-binding residues include H12 and H14. Residues H14, D16, and G170 each contribute to the substrate site. H197 lines the Zn(2+) pocket. E200 serves as the catalytic Proton donor. D278 is a Zn(2+) binding site. D279 is a substrate binding site.

The protein belongs to the metallo-dependent hydrolases superfamily. Adenosine and AMP deaminases family. Adenosine deaminase subfamily. Zn(2+) serves as cofactor.

It carries out the reaction adenosine + H2O + H(+) = inosine + NH4(+). The enzyme catalyses 2'-deoxyadenosine + H2O + H(+) = 2'-deoxyinosine + NH4(+). Functionally, catalyzes the hydrolytic deamination of adenosine and 2-deoxyadenosine. The protein is Adenosine deaminase of Shigella boydii serotype 4 (strain Sb227).